Consider the following 252-residue polypeptide: MASSDGKPLPTPASVGGGGGSSTAPPGQPTTVASKVLDMGAAAMQSLRPVKQAKQHMCTFALYAHDPKRQVETHHYVSRLNQDFLQCAVYDSDKADARLIGVEYIVSRKIFDSLPAEEQRLWHSHAHEIKSGLWTSPHVAGLLEKAELDHMAATFGKFWCTWQVDRGDRLPLGAPALMVSPQADPAAAVRPDLVRKRDDRYGLSTEELRAARADVEAPAEEHPGQADYWLRHRKGFAVDVVPHEMKRHAPFP.

A disordered region spans residues 1–31 (MASSDGKPLPTPASVGGGGGSSTAPPGQPTT). Positions 22–31 (STAPPGQPTT) are enriched in low complexity.

It belongs to the OBAP family.

This is Oil body-associated protein 2A from Zea mays (Maize).